A 441-amino-acid polypeptide reads, in one-letter code: ATP-dependent RNA helicase SUB2-1 (441 aa).

Positions 1–19 (MSHEGEEDLLEYSDNEQDI) are enriched in acidic residues. Positions 1-46 (MSHEGEEDLLEYSDNEQDIQVDASKAAEPSELDATTAEDASNGDAE) are disordered. A Q motif motif is present at residues 57–85 (TGFKDFLLKPELARAIIDCGFEHPSEVQQ). A Helicase ATP-binding domain is found at 88-263 (IPQSIHGTDV…RRFLQNPLEI (176 aa)). 101–108 (AKSGLGKT) contributes to the ATP binding site. The DECD box motif lies at 210-213 (DECD). In terms of domain architecture, Helicase C-terminal spans 291–436 (KLAQLLDDLE…EFPEEGIDPS (146 aa)).

It belongs to the DEAD box helicase family. DECD subfamily.

It localises to the nucleus. The enzyme catalyses ATP + H2O = ADP + phosphate + H(+). Functionally, ATP-binding RNA helicase involved in transcription elongation and required for the export of mRNA out of the nucleus. SUB2 also plays a role in pre-mRNA splicing and spliceosome assembly. May be involved in rDNA and telomeric silencing, and maintenance of genome integrity. The chain is ATP-dependent RNA helicase SUB2-1 (SUB2-1) from Vanderwaltozyma polyspora (strain ATCC 22028 / DSM 70294 / BCRC 21397 / CBS 2163 / NBRC 10782 / NRRL Y-8283 / UCD 57-17) (Kluyveromyces polysporus).